The chain runs to 211 residues: Protein-methionine-sulfoxide reductase heme-binding subunit MsrQ (211 aa).

5 helical membrane-spanning segments follow: residues 17-37 (LAGL…GLGA), 82-102 (LWCF…ELGV), 116-136 (PYLT…FTST), 153-173 (FVYL…KIIS), and 178-198 (IYAG…LSLF).

This sequence belongs to the MsrQ family. As to quaternary structure, heterodimer of a catalytic subunit (MsrP) and a heme-binding subunit (MsrQ). The cofactor is FMN. Heme b is required as a cofactor.

It localises to the cell inner membrane. Part of the MsrPQ system that repairs oxidized periplasmic proteins containing methionine sulfoxide residues (Met-O), using respiratory chain electrons. Thus protects these proteins from oxidative-stress damage caused by reactive species of oxygen and chlorine generated by the host defense mechanisms. MsrPQ is essential for the maintenance of envelope integrity under bleach stress, rescuing a wide series of structurally unrelated periplasmic proteins from methionine oxidation, including the primary periplasmic chaperone SurA and the lipoprotein Pal. MsrQ provides electrons for reduction to the reductase catalytic subunit MsrP, using the quinone pool of the respiratory chain. This is Protein-methionine-sulfoxide reductase heme-binding subunit MsrQ from Shigella boydii serotype 4 (strain Sb227).